A 57-amino-acid chain; its full sequence is uncharacterized protein (57 aa).

This is an uncharacterized protein from Haemophilus influenzae (strain ATCC 51907 / DSM 11121 / KW20 / Rd).